Here is a 122-residue protein sequence, read N- to C-terminus: Large ribosomal subunit protein uL14 (122 aa).

Belongs to the universal ribosomal protein uL14 family. In terms of assembly, part of the 50S ribosomal subunit. Forms a cluster with proteins L3 and L19. In the 70S ribosome, L14 and L19 interact and together make contacts with the 16S rRNA in bridges B5 and B8.

Its function is as follows. Binds to 23S rRNA. Forms part of two intersubunit bridges in the 70S ribosome. The chain is Large ribosomal subunit protein uL14 from Clostridium tetani (strain Massachusetts / E88).